We begin with the raw amino-acid sequence, 240 residues long: MDLPEIQADWLTPPDLATAARVQRDLAGRVVPHGPDGPVRTVAGVDVSQFGRDPSGRVFAAVVLLDAATREVLEVGTAMRVAPIPYVPGFLGFREVPALLAAFGALSRRPDLVLVDGHGTSHPRGLGIAAHLGVLLDIPAIGVAKSILVGAPAGELGGTRGSRVPLVWQGRTIATVLRSKDRVAPLYVSTGHRIDEEAAVDWTLRLGGRYRLPEPTRRAHEAANAFRRAWGTGAAEGSGV.

Residues Asp-46 and Asp-116 each contribute to the Mg(2+) site.

It belongs to the endonuclease V family. It depends on Mg(2+) as a cofactor.

Its subcellular location is the cytoplasm. The enzyme catalyses Endonucleolytic cleavage at apurinic or apyrimidinic sites to products with a 5'-phosphate.. Functionally, DNA repair enzyme involved in the repair of deaminated bases. Selectively cleaves double-stranded DNA at the second phosphodiester bond 3' to a deoxyinosine leaving behind the intact lesion on the nicked DNA. The chain is Endonuclease V from Rhodospirillum centenum (strain ATCC 51521 / SW).